Consider the following 204-residue polypeptide: Putative AgrB-like protein (204 aa).

Helical transmembrane passes span 52-74 (YGIA…YLWL), 87-107 (LNCT…FQNV), 111-131 (NWIV…FAPA), and 156-176 (LILT…LIMI).

Belongs to the AgrB family.

Its subcellular location is the cell membrane. In terms of biological role, may be involved in the proteolytic processing of a quorum sensing system signal molecule precursor. In Listeria monocytogenes serotype 4a (strain HCC23), this protein is Putative AgrB-like protein.